An 83-amino-acid chain; its full sequence is Cytochrome b559 subunit alpha (83 aa).

A helical membrane pass occupies residues 21–35; the sequence is VIHSITIPSLFIAGW. His-23 contacts heme.

The protein belongs to the PsbE/PsbF family. Heterodimer of an alpha subunit and a beta subunit. PSII is composed of 1 copy each of membrane proteins PsbA, PsbB, PsbC, PsbD, PsbE, PsbF, PsbH, PsbI, PsbJ, PsbK, PsbL, PsbM, PsbT, PsbX, PsbY, PsbZ, Psb30/Ycf12, at least 3 peripheral proteins of the oxygen-evolving complex and a large number of cofactors. It forms dimeric complexes. Heme b is required as a cofactor.

Its subcellular location is the plastid. It localises to the chloroplast thylakoid membrane. Its function is as follows. This b-type cytochrome is tightly associated with the reaction center of photosystem II (PSII). PSII is a light-driven water:plastoquinone oxidoreductase that uses light energy to abstract electrons from H(2)O, generating O(2) and a proton gradient subsequently used for ATP formation. It consists of a core antenna complex that captures photons, and an electron transfer chain that converts photonic excitation into a charge separation. This is Cytochrome b559 subunit alpha from Helianthus annuus (Common sunflower).